The primary structure comprises 560 residues: uncharacterized protein (560 aa).

The first 29 residues, 1 to 29 (MKSALKKSVVSTSISLILASGMAAFAAHA), serve as a signal peptide directing secretion. Residues Asp-66, Asp-67, and Ser-132 each contribute to the Ca(2+) site. Catalysis depends on Ser-132, which acts as the Nucleophile. A 3-oxoalanine (Ser) modification is found at Ser-132. His-185 is a catalytic residue. Asp-345 and Asn-346 together coordinate Ca(2+).

Belongs to the sulfatase family. Ca(2+) serves as cofactor. In terms of processing, the conversion to 3-oxoalanine (also known as C-formylglycine, FGly), of a serine or cysteine residue in prokaryotes and of a cysteine residue in eukaryotes, is critical for catalytic activity.

This is an uncharacterized protein from Escherichia coli (strain K12).